The chain runs to 411 residues: MTHWFHRNPLKATAPVSFNFYGVASTQAASKICSDLRSTRARLLELFSDITCNHEMMKNATDAYFSLLLGFIDSLDGGTQDNKLRYIQNFKWTDTLQGNAPSAQQDAVFELVSMGFNVALWYTKYASRLAGKEDITEEEAKEVHRSLKIAAGVFKHLKENHIPKLITPVEKGRDLETRVIDAYTVQCQAEAQEVTIARAIELKHNPGLIAALAYETANYYQKVDHTLATLDPVYIAKWRSYTQLKMCFYMAYSYCYHGQTLLSADKCGEAIRSLQEAEKFYGKAEALCKEYGETKGPGTTAKPSGHLFFRKMGTLVRNTLEKCQRENGFIYFQKVPPEAPQLELKANYGLVEPVPFEFPAMTSQWSPETHTGFDLTKRPKDDSAKPKKEEEVKPMKEPDIKPQKDSGCQIS.

Positions F90 to M395 constitute a BRO1 domain. The disordered stretch occupies residues T362–S411. The segment covering L375–K404 has biased composition (basic and acidic residues). C408 is modified (cysteine methyl ester). Residue C408 is the site of S-farnesyl cysteine attachment. The propeptide at Q409–S411 is removed in mature form.

The protein belongs to the BROX family. In terms of processing, farnesylation is required for nuclear envelope localization.

The protein resides in the nucleus membrane. Nuclear envelope-associated factor that is involved in the nuclear envelope ruptures during interphase (NERDI) repair. This is BRO1 domain-containing protein BROX from Xenopus tropicalis (Western clawed frog).